The sequence spans 260 residues: Methanethiol S-methyltransferase (260 aa).

Transmembrane regions (helical) follow at residues 27–47 (CYLFFLLTALYLIGFLAGIGV), 55–75 (PGITWPLAVLVDAILITLFAA), 107–127 (CLVLALLFVLWQPIATPVWNV), 134–154 (GLLIALFWLGWGIVLLATFLI), and 196–216 (FLIAFWATPDMTAGHLLFAIL).

The protein belongs to the nurim family.

The protein resides in the membrane. It catalyses the reaction methanethiol + S-adenosyl-L-methionine = dimethyl sulfide + S-adenosyl-L-homocysteine + H(+). In terms of biological role, catalyzes the methylation of methanethiol (MeSH) to yield dimethylsulphide (DMS). The polypeptide is Methanethiol S-methyltransferase (Pseudomonas sp. (strain GM41(2012))).